The sequence spans 627 residues: Chaperone protein DnaK (627 aa).

Position 197 is a phosphothreonine; by autocatalysis (T197). Low complexity predominate over residues 596–615 (MYAQGGDQGQQAAPQQEQSG). Residues 596-627 (MYAQGGDQGQQAAPQQEQSGDNVEDVEFEEVK) form a disordered region. The span at 617–627 (NVEDVEFEEVK) shows a compositional bias: acidic residues.

This sequence belongs to the heat shock protein 70 family.

Functionally, acts as a chaperone. The chain is Chaperone protein DnaK from Flavobacterium johnsoniae (strain ATCC 17061 / DSM 2064 / JCM 8514 / BCRC 14874 / CCUG 350202 / NBRC 14942 / NCIMB 11054 / UW101) (Cytophaga johnsonae).